The primary structure comprises 116 residues: MALLTALAVGAGGAAGAVARYAVGLSVGRRAVDTGLVNVFGSLLFGVAIGADFGGAPAVAVTVGFCGAFTTFSSFAVETVRLAEDGQRLAAAGNAVGTLAAALLAVFLGIALGAAL.

2 helical membrane passes run 3-23 (LLTA…RYAV) and 43-63 (LLFG…AVTV). Residues G67 and T70 each contribute to the Na(+) site. The helical transmembrane segment at 96-116 (VGTLAAALLAVFLGIALGAAL) threads the bilayer.

The protein belongs to the fluoride channel Fluc/FEX (TC 1.A.43) family.

The protein resides in the cell membrane. It catalyses the reaction fluoride(in) = fluoride(out). With respect to regulation, na(+) is not transported, but it plays an essential structural role and its presence is essential for fluoride channel function. In terms of biological role, fluoride-specific ion channel. Important for reducing fluoride concentration in the cell, thus reducing its toxicity. The sequence is that of Fluoride-specific ion channel FluC 2 from Natronomonas pharaonis (strain ATCC 35678 / DSM 2160 / CIP 103997 / JCM 8858 / NBRC 14720 / NCIMB 2260 / Gabara) (Halobacterium pharaonis).